Here is a 2479-residue protein sequence, read N- to C-terminus: MPPNINWKEIMKVDPDDLPRQEELADNLLISLSKVEVNELKSEKQENVIHLFRITQSLMKMKAQEVELALEEVEKAGEEQAKFENQLKTKVMKLENELEMAQQSAGGRDTRFLRNEICQLEKQLEQKDRELEDMEKELEKEKKVNEQLALRNEEAENENSKLRRENKRLKKKNEQLCQDIIDYQKQIDSQKETLLSRRGEDSDYRSQLSKKNYELIQYLDEIQTLTEANEKIEVQNQEMRKNLEESVQEMEKMTDEYNRMKAIVHQTDNVIDQLKKENDHYQLQVQELTDLLKSKNEEDDPIMVAVNAKVEEWKLILSSKDDEIIEYQQMLHNLREKLKNAQLDADKSNVMALQQGIQERDSQIKMLTEQVEQYTKEMEKNTCIIEDLKNELQRNKGASTLSQQTHMKIQSTLDILKEKTKEAERTAELAEADAREKDKELVEALKRLKDYESGVYGLEDAVVEIKNCKNQIKIRDREIEILTKEINKLELKISDFLDENEALRERVGLEPKTMIDLTEFRNSKHLKQQQYRAENQILLKEIESLEEERLDLKKKIRQMAQERGKRSATSGLTTEDLNLTENISQGDRISERKLDLLSLKNMSEAQSKNEFLSRELIEKERDLERSRTVIAKFQNKLKELVEENKQLEEGMKEILQAIKEMQKDPDVKGGETSLIIPSLERLVNAIESKNAEGIFDASLHLKAQVDQLTGRNEELRQELRESRKEAINYSQQLAKANLKIDHLEKETSLLRQSEGSNVVFKGIDLPDGIAPSSASIINSQNEYLIHLLQELENKEKKLKNLEDSLEDYNRKFAVIRHQQSLLYKEYLSEKETWKTESKTIKEEKRKLEDQVQQDAIKVKEYNNLLNALQMDSDEMKKILAENSRKITVLQVNEKSLIRQYTTLVELERQLRKENEKQKNELLSMEAEVCEKIGCLQRFKEMAIFKIAALQKVVDNSVSLSELELANKQYNELTAKYRDILQKDNMLVQRTSNLEHLECENISLKEQVESINKELEITKEKLHTIEQAWEQETKLGNESSMDKAKKSITNSDIVSISKKITMLEMKELNERQRAEHCQKMYEHLRTSLKQMEERNFELETKFAELTKINLDAQKVEQMLRDELADSVSKAVSDADRQRILELEKNEMELKVEVSKLREISDIARRQVEILNAQQQSRDKEVESLRMQLLDYQAQSDEKSLIAKLHQHNVSLQLSEATALGKLESITSKLQKMEAYNLRLEQKLDEKEQALYYARLEGRNRAKHLRQTIQSLRRQFSGALPLAQQEKFSKTMIQLQNDKLKIMQEMKNSQQEHRNMENKTLEMELKLKGLEELISTLKDTKGAQKVINWHMKIEELRLQELKLNRELVKDKEEIKYLNNIISEYERTISSLEEEIVQQNKFHEERQMAWDQREVDLERQLDIFDRQQNEILNAAQKFEEATGSIPDPSLPLPNQLEIALRKIKENIRIILETRATCKSLEEKLKEKESALRLAEQNILSRDKVINELRLRLPATAEREKLIAELGRKEMEPKSHHTLKIAHQTIANMQARLNQKEEVLKKYQRLLEKAREEQREIVKKHEEDLHILHHRLELQADSSLNKFKQTAWDLMKQSPTPVPTNKHFIRLAEMEQTVAEQDDSLSSLLVKLKKVSQDLERQREITELKVKEFENIKLQLQENHEDEVKKVKAEVEDLKYLLDQSQKESQCLKSELQAQKEANSRAPTTTMRNLVERLKSQLALKEKQQKALSRALLELRAEMTAAAEERIISATSQKEAHLNVQQIVDRHTRELKTQVEDLNENLLKLKEALKTSKNRENSLTDNLNDLNNELQKKQKAYNKILREKEEIDQENDELKRQIKRLTSGLQGKPLTDNKQSLIEELQRKVKKLENQLEGKVEEVDLKPMKEKNAKEELIRWEEGKKWQAKIEGIRNKLKEKEGEVFTLTKQLNTLKDLFAKADKEKLTLQRKLKTTGMTVDQVLGIRALESEKELEELKKRNLDLENDILYMRAHQALPRDSVVEDLHLQNRYLQEKLHALEKQFSKDTYSKPSISGIESDDHCQREQELQKENLKLSSENIELKFQLEQANKDLPRLKNQVRDLKEMCEFLKKEKAEVQRKLGHVRGSGRSGKTIPELEKTIGLMKKVVEKVQRENEQLKKASGILTSEKMANIEQENEKLKAELEKLKAHLGHQLSMHYESKTKGTEKIIAENERLRKELKKETDAAEKLRIAKNNLEILNEKMTVQLEETGKRLQFAESRGPQLEGADSKSWKSIVVTRMYETKLKELETDIAKKNQSITDLKQLVKEATEREQKVNKYNEDLEQQIKILKHVPEGAETEQGLKRELQVLRLANHQLDKEKAELIHQIEANKDQSGAESTIPDADQLKEKIKDLETQLKMSDLEKQHLKEEIKKLKKELENFDPSFFEEIEDLKYNYKEEVKKNILLEEKVKKLSEQLGVELTSPVAASEEFEDEEESPVNFPIY.

Positions 1–695 (MPPNINWKEI…IESKNAEGIF (695 aa)) are self-association (with itself or C-terminus). Coiled-coil stretches lie at residues 59-565 (MKMK…ERGK), 598-664 (SLKN…MQKD), 697-931 (ASLH…VCEK), 958-1027 (SLSE…IEQA), 1071-1498 (QRAE…ILSR), 1533-1584 (HTLK…LHIL), and 1635-2452 (DSLS…SEQL). Positions 149–163 (ALRNEEAENENSKLR) are enriched in basic and acidic residues. The interval 149-168 (ALRNEEAENENSKLRRENKR) is disordered. Residues 696-896 (DASLHLKAQV…TVLQVNEKSL (201 aa)) are interaction with IQCB1. Residues 1966–2479 (TTGMTVDQVL…EESPVNFPIY (514 aa)) are self-association (with itself or N-terminus). The interval 2458–2479 (SPVAASEEFEDEEESPVNFPIY) is disordered.

As to quaternary structure, part of the tectonic-like complex (also named B9 complex). Interacts with ATF4 via its N-terminal region. Associates with the BBSome complex, interacting (via N-terminus) with BBS4. Interacts with IQCB1/NPHP5; IQCB1 and CEP290/NPHP6 are proposed to form a functional NPHP5-6 module localized to the centrosome. Interacts with NPHP4; the interaction likely requires additional interactors. Interacts with ZNF423, FAM161A, CEP162, CEP162, CEP131, TALPID3, CCDC13, CC2D2A, RPGRIP1. Can self-associate (homo- or heteromeric). Interacts with CCP110; required for suppressing cilia formation. Interacts with RPGR. Associates (via C-terminus) with microtubules; association to microtubule is reduced in response to cellular stress, such as ultraviolet light (UV) radiation or heat shock, in a process that requires p38 MAP kinase signaling. Interacts with FAM161A. Interacts with PCM1. Interacts with CCDC66. Interacts with ARMC9 and CSPP1. Ubiquitinated. May undergo monoubiquitination; monoubiquitination is inhibited in response to cellular stress, such as ultraviolet light (UV) radiation or heat shock, but does not cause its displacement from centriolar satellites. As to expression, ubiquitous. Expressed strongly in placenta and weakly in brain.

It is found in the cytoplasm. The protein resides in the cytoskeleton. It localises to the microtubule organizing center. The protein localises to the centrosome. Its subcellular location is the centriolar satellite. It is found in the nucleus. The protein resides in the cell projection. It localises to the cilium. The protein localises to the cilium basal body. Its subcellular location is the centriole. It is found in the cytoplasmic vesicle. Involved in early and late steps in cilia formation. Its association with CCP110 is required for inhibition of primary cilia formation by CCP110. May play a role in early ciliogenesis in the disappearance of centriolar satellites and in the transition of primary ciliar vesicles (PCVs) to capped ciliary vesicles (CCVs). Required for the centrosomal recruitment of RAB8A and for the targeting of centriole satellite proteins to centrosomes such as of PCM1. Required for the correct localization of ciliary and phototransduction proteins in retinal photoreceptor cells; may play a role in ciliary transport processes. Required for efficient recruitment of RAB8A to primary cilium. In the ciliary transition zone is part of the tectonic-like complex which is required for tissue-specific ciliogenesis and may regulate ciliary membrane composition. Involved in regulation of the BBSome complex integrity, specifically for presence of BBS2, BBS5 and BBS8/TTC8 in the complex, and in ciliary targeting of selected BBSome cargos. May play a role in controlling entry of the BBSome complex to cilia possibly implicating IQCB1/NPHP5. Activates ATF4-mediated transcription. The sequence is that of Centrosomal protein of 290 kDa (CEP290) from Homo sapiens (Human).